Reading from the N-terminus, the 106-residue chain is Large ribosomal subunit protein uL24 (106 aa).

It belongs to the universal ribosomal protein uL24 family. In terms of assembly, part of the 50S ribosomal subunit.

One of two assembly initiator proteins, it binds directly to the 5'-end of the 23S rRNA, where it nucleates assembly of the 50S subunit. In terms of biological role, one of the proteins that surrounds the polypeptide exit tunnel on the outside of the subunit. This Marinobacter nauticus (strain ATCC 700491 / DSM 11845 / VT8) (Marinobacter aquaeolei) protein is Large ribosomal subunit protein uL24.